Consider the following 292-residue polypeptide: Large ribosomal subunit protein bL19m (292 aa).

The segment at Pro-40 to Val-61 is disordered. Position 77 is a phosphoserine (Ser-77).

Belongs to the bacterial ribosomal protein bL19 family. In terms of assembly, component of the mitochondrial ribosome large subunit (39S) which comprises a 16S rRNA and about 50 distinct proteins.

Its subcellular location is the mitochondrion. In Pongo abelii (Sumatran orangutan), this protein is Large ribosomal subunit protein bL19m (MRPL19).